Consider the following 197-residue polypeptide: Probable chorismate pyruvate-lyase (197 aa).

The segment covering 1–14 (MRFDAADAHWRETP) has biased composition (basic and acidic residues). The tract at residues 1 to 25 (MRFDAADAHWRETPRPGASGAQKDW) is disordered. Substrate-binding residues include Arg73, Leu111, and Glu173.

Belongs to the UbiC family.

It localises to the cytoplasm. The enzyme catalyses chorismate = 4-hydroxybenzoate + pyruvate. It functions in the pathway cofactor biosynthesis; ubiquinone biosynthesis. Its function is as follows. Removes the pyruvyl group from chorismate, with concomitant aromatization of the ring, to provide 4-hydroxybenzoate (4HB) for the ubiquinone pathway. This chain is Probable chorismate pyruvate-lyase, found in Burkholderia thailandensis (strain ATCC 700388 / DSM 13276 / CCUG 48851 / CIP 106301 / E264).